The chain runs to 502 residues: Glycerol kinase (502 aa).

Thr-14 is a binding site for ADP. Thr-14, Thr-15, and Ser-16 together coordinate ATP. Residue Thr-14 coordinates sn-glycerol 3-phosphate. Position 18 (Arg-18) interacts with ADP. Sn-glycerol 3-phosphate contacts are provided by Arg-84, Glu-85, and Tyr-136. Glycerol is bound by residues Arg-84, Glu-85, and Tyr-136. At His-232 the chain carries Phosphohistidine; by HPr. A sn-glycerol 3-phosphate-binding site is contributed by Asp-246. Residues Asp-246 and Gln-247 each coordinate glycerol. ADP contacts are provided by Thr-268 and Gly-311. Residues Thr-268, Gly-311, Gln-315, and Gly-412 each coordinate ATP. 2 residues coordinate ADP: Gly-412 and Asn-416.

This sequence belongs to the FGGY kinase family. As to quaternary structure, homotetramer and homodimer (in equilibrium). The phosphoenolpyruvate-dependent sugar phosphotransferase system (PTS), including enzyme I, and histidine-containing protein (HPr) are required for the phosphorylation, which leads to the activation of the enzyme.

The enzyme catalyses glycerol + ATP = sn-glycerol 3-phosphate + ADP + H(+). It participates in polyol metabolism; glycerol degradation via glycerol kinase pathway; sn-glycerol 3-phosphate from glycerol: step 1/1. Activated by phosphorylation and inhibited by fructose 1,6-bisphosphate (FBP). Key enzyme in the regulation of glycerol uptake and metabolism. Catalyzes the phosphorylation of glycerol to yield sn-glycerol 3-phosphate. This Streptococcus pneumoniae (strain 70585) protein is Glycerol kinase.